Reading from the N-terminus, the 488-residue chain is Probable malate:quinone oxidoreductase (488 aa).

This sequence belongs to the MQO family. FAD serves as cofactor.

The enzyme catalyses (S)-malate + a quinone = a quinol + oxaloacetate. It functions in the pathway carbohydrate metabolism; tricarboxylic acid cycle; oxaloacetate from (S)-malate (quinone route): step 1/1. In Neisseria meningitidis serogroup C / serotype 2a (strain ATCC 700532 / DSM 15464 / FAM18), this protein is Probable malate:quinone oxidoreductase.